The chain runs to 176 residues: Urease accessory protein UreE (176 aa).

Residues 134-176 (EAGAYGSGGHHHHGESSQGHAHGPLAPIPVHQKIHRPSDIPSR) form a disordered region.

The protein belongs to the UreE family.

Its subcellular location is the cytoplasm. Its function is as follows. Involved in urease metallocenter assembly. Binds nickel. Probably functions as a nickel donor during metallocenter assembly. The polypeptide is Urease accessory protein UreE (Nitrosospira multiformis (strain ATCC 25196 / NCIMB 11849 / C 71)).